A 150-amino-acid chain; its full sequence is Arginine repressor (150 aa).

The protein belongs to the ArgR family.

The protein localises to the cytoplasm. It participates in amino-acid biosynthesis; L-arginine biosynthesis [regulation]. Regulates arginine biosynthesis genes. The protein is Arginine repressor of Halothermothrix orenii (strain H 168 / OCM 544 / DSM 9562).